Reading from the N-terminus, the 510-residue chain is Adenosine deaminase 2 (510 aa).

Positions 1-24 (MSGWPVLPALLLAVAMSSFHSATS) are cleaved as a signal peptide. The dimerization stretch occupies residues 25 to 95 (RDEERNRLLM…GLMEKSAVFN (71 aa)). 2 residues coordinate Zn(2+): histidine 107 and histidine 109. Position 110 (aspartate 110) interacts with substrate. N-linked (GlcNAc...) asparagine glycosylation is present at asparagine 122. Residues 122–182 (NATYRPYCYF…TEFDNSLLRT (61 aa)) are PRB domain. A disulfide bridge links cysteine 132 with cysteine 156. The N-linked (GlcNAc...) asparagine glycan is linked to asparagine 171. Substrate contacts are provided by residues 201–208 (WKKFKTIF), histidine 290, and glycine 323. Histidine 353 is a binding site for Zn(2+). Glutamate 356 acts as the Proton donor in catalysis. Asparagine 375 carries an N-linked (GlcNAc...) asparagine glycan. Catalysis depends on histidine 381, which acts as the Proton acceptor. Aspartate 438 contributes to the Zn(2+) binding site. Aspartate 439 is a substrate binding site.

Belongs to the metallo-dependent hydrolases superfamily. Adenosine and AMP deaminases family. ADGF subfamily. In terms of assembly, homodimer. Interacts with adenosine receptors. Binds heparin. It depends on Zn(2+) as a cofactor.

It localises to the secreted. It catalyses the reaction adenosine + H2O + H(+) = inosine + NH4(+). Its function is as follows. Adenosine deaminase that may contribute to the degradation of extracellular adenosine, a signaling molecule that controls a variety of cellular responses. Requires elevated adenosine levels for optimal enzyme activity. Binds to cell surfaces via proteoglycans and may play a role in the regulation of cell proliferation and differentiation, independently of its enzyme activity. This is Adenosine deaminase 2 from Sus scrofa (Pig).